Consider the following 959-residue polypeptide: Nucleoporin NUP100/NSP100 (959 aa).

The segment at 1-104 (MFGNNRPMFG…NSSNASNGNT (104 aa)) is disordered. 3 FG repeats span residues 2 to 3 (FG), 9 to 10 (FG), and glycine 17. Positions 12 to 36 (SNLSFGSNTSSFGGQQSQQPNSLFG) are enriched in polar residues. Residues 21-24 (SSFG) form an SLFG 1; approximate repeat. The stretch at 33–36 (SLFG) is one SLFG 2 repeat. Low complexity predominate over residues 37–48 (NSNNNNNSTSNN). Residues 51 to 54 (SGFG) form an SLFG 3; approximate repeat. 2 stretches are compositionally biased toward low complexity: residues 56–81 (FTSA…AFGQ) and 92–104 (GSLN…NGNT). Residues 66–69 (SLFG) form an SLFG 4 repeat. The stretch at 77–80 (GAFG) is one GLFG 1; approximate repeat. The SLFG 5; approximate repeat unit spans residues 89-92 (SPFG). One copy of the FG 4 repeat lies at 105-106 (FG). Residues 112-115 (GSFG) form a GLFG 2; approximate repeat. The span at 121–136 (AFNNNSNSTNSPFGFN) shows a compositional bias: low complexity. Positions 121 to 172 (AFNNNSNSTNSPFGFNKPNTGGTLFGSQNNNSAGTSSLFGGQSTSTTGTFGN) are disordered. An SLFG 6; approximate repeat occupies 131-134 (SPFG). The segment covering 137-153 (KPNTGGTLFGSQNNNSA) has biased composition (polar residues). Residues 145–146 (FG) form an FG 5 repeat. The span at 154 to 172 (GTSSLFGGQSTSTTGTFGN) shows a compositional bias: low complexity. The stretch at 157–160 (SLFG) is one SLFG 7 repeat. One copy of the GLFG 3; approximate repeat lies at 168 to 171 (GTFG). The SLFG 8; approximate repeat unit spans residues 175–178 (SSFG). An FG 6 repeat occupies 189–190 (FG). The disordered stretch occupies residues 190–394 (GAGNNSQSNT…NNQQQQSTGL (205 aa)). Polar residues predominate over residues 192-245 (GNNSQSNTTGSLFGNQQSSAFGTNNQQGSLFGQQSQNTNNAFGNQNQLGGSSFG). Residues 202–205 (SLFG) form an SLFG 9 repeat. One copy of the SLFG 10; approximate repeat lies at 210–213 (SAFG). One copy of the SLFG 11 repeat lies at 220–223 (SLFG). An FG 7 repeat occupies 233–234 (FG). One copy of the SLFG 12; approximate repeat lies at 242-245 (SSFG). Residues 253–256 (SLFG) form an SLFG 13 repeat. The segment covering 259-293 (NNTLGNTTNNRNGLFGQMNSSNQGSSNSGLFGQNS) has biased composition (low complexity). GLFG repeat units lie at residues 271–274 (GLFG) and 287–290 (GLFG). Over residues 294–303 (MNSSTQGVFG) the composition is skewed to polar residues. The stretch at 300 to 303 (GVFG) is one GLFG 6; approximate repeat. A compositionally biased stretch (low complexity) spans 304 to 317 (QNNNQMQINGNNNN). Residues 318-321 (SLFG) form an SLFG 14 repeat. GLFG repeat units follow at residues 333–336 (GLFG), 345–348 (GLFG), 358–361 (GLFG), 379–382 (GLFG), and 393–396 (GLFG). Low complexity predominate over residues 336–352 (GQNNQQQGSGLFGQNSQ). The span at 353 to 377 (TSGSSGLFGQNNQKQPNTFTQSNTG) shows a compositional bias: polar residues. 3 SLFG repeats span residues 405–408 (SLFG), 417–420 (SLFG), and 436–439 (SLFG). Residues 448–449 (FG) form an FG 8 repeat. One copy of the SLFG 18 repeat lies at 462–465 (SLFG). An SLFG 19; approximate repeat occupies 474-477 (SLFG). 3 GLFG repeats span residues 490-493 (GLFG), 506-509 (GLFG), and 523-526 (GLFG). An FG 9 repeat occupies 542–543 (FG). The GLFG 15 repeat unit spans residues 550-553 (GLFG). One copy of the FG 10 repeat lies at 569 to 570 (FG). Disordered stretches follow at residues 672–697 (TLER…LNSN) and 745–794 (DDQA…PMIE). Over residues 679–697 (GSSTSNSITDPESSYLNSN) the composition is skewed to polar residues. Residues 757 to 775 (LTEKAHSPQTDLKDDHDES) are compositionally biased toward basic and acidic residues. Phosphoserine occurs at positions 763 and 783. Residues 777–790 (PDPQSKSPNGSTSI) are compositionally biased toward polar residues. Positions 814–956 (KNNYYISPSI…GTYSYTIDHP (143 aa)) constitute a Peptidase S59 domain. Residues 816–955 (NYYISPSIET…TGTYSYTIDH (140 aa)) are nucleoporin RNA-binding motif (NRM).

It belongs to the nucleoporin GLFG family. As to quaternary structure, component of the nuclear pore complex (NPC). NPC constitutes the exclusive means of nucleocytoplasmic transport. NPCs allow the passive diffusion of ions and small molecules and the active, nuclear transport receptor-mediated bidirectional transport of macromolecules such as proteins, RNAs, ribonucleoparticles (RNPs), and ribosomal subunits across the nuclear envelope. Due to its 8-fold rotational symmetry, all subunits are present with 8 copies or multiples thereof. Through its FG repeats NUP100 interacts with numerous karyopherins including KAP95, and MEX67.

Its subcellular location is the nucleus. The protein resides in the nuclear pore complex. The protein localises to the nucleus membrane. In terms of biological role, functions as a component of the nuclear pore complex (NPC). NPC components, collectively referred to as nucleoporins (NUPs), can play the role of both NPC structural components and of docking or interaction partners for transiently associated nuclear transport factors. Active directional transport is assured by both, a Phe-Gly (FG) repeat affinity gradient for these transport factors across the NPC and a transport cofactor concentration gradient across the nuclear envelope (GSP1 and GSP2 GTPases associated predominantly with GTP in the nucleus, with GDP in the cytoplasm). NUP100 plays an important role in several nuclear export and import pathways including poly(A)+ RNA and protein transport. In Saccharomyces cerevisiae (strain ATCC 204508 / S288c) (Baker's yeast), this protein is Nucleoporin NUP100/NSP100 (NUP100).